We begin with the raw amino-acid sequence, 197 residues long: Xanthine phosphoribosyltransferase (197 aa).

Leu20 and Asn27 together coordinate xanthine. 128–132 (ANGQA) contributes to the 5-phospho-alpha-D-ribose 1-diphosphate binding site. Lys156 serves as a coordination point for xanthine.

This sequence belongs to the purine/pyrimidine phosphoribosyltransferase family. Xpt subfamily. As to quaternary structure, homodimer.

Its subcellular location is the cytoplasm. The catalysed reaction is XMP + diphosphate = xanthine + 5-phospho-alpha-D-ribose 1-diphosphate. The protein operates within purine metabolism; XMP biosynthesis via salvage pathway; XMP from xanthine: step 1/1. Converts the preformed base xanthine, a product of nucleic acid breakdown, to xanthosine 5'-monophosphate (XMP), so it can be reused for RNA or DNA synthesis. This Bacillus cereus (strain ATCC 14579 / DSM 31 / CCUG 7414 / JCM 2152 / NBRC 15305 / NCIMB 9373 / NCTC 2599 / NRRL B-3711) protein is Xanthine phosphoribosyltransferase.